The primary structure comprises 473 residues: 1-deoxy-D-xylulose 5-phosphate reductoisomerase, chloroplastic (473 aa).

A chloroplast-targeting transit peptide spans methionine 1 to cysteine 49. NADPH-binding residues include threonine 85, glycine 86, serine 87, isoleucine 88, glycine 111, asparagine 113, and asparagine 199. Lysine 200 provides a ligand contact to 1-deoxy-D-xylulose 5-phosphate. Glutamate 201 contributes to the NADPH binding site. Aspartate 225 is a binding site for Mn(2+). 1-deoxy-D-xylulose 5-phosphate is bound by residues serine 226, glutamate 227, serine 251, and histidine 274. Glutamate 227 contributes to the Mn(2+) binding site. Glycine 280 contributes to the NADPH binding site. 1-deoxy-D-xylulose 5-phosphate is bound by residues serine 287, asparagine 292, lysine 293, and glutamate 296. Mn(2+) is bound at residue glutamate 296.

Belongs to the DXR family. Mn(2+) is required as a cofactor. Mg(2+) serves as cofactor.

It is found in the plastid. The protein resides in the chloroplast stroma. The enzyme catalyses 2-C-methyl-D-erythritol 4-phosphate + NADP(+) = 1-deoxy-D-xylulose 5-phosphate + NADPH + H(+). Its pathway is isoprenoid biosynthesis; isopentenyl diphosphate biosynthesis via DXP pathway; isopentenyl diphosphate from 1-deoxy-D-xylulose 5-phosphate: step 1/6. Functionally, enzyme of the plastid non-mevalonate pathway for isoprenoid biosynthesis that catalyzes the NADPH-dependent rearrangement and reduction of 1-deoxy-D-xylulose-5-phosphate (DXP) to 2-C-methyl-D-erythritol 4-phosphate (MEP). Required for chloroplast development. This chain is 1-deoxy-D-xylulose 5-phosphate reductoisomerase, chloroplastic (DXR), found in Oryza sativa subsp. japonica (Rice).